Here is a 290-residue protein sequence, read N- to C-terminus: Secreted chorismate mutase (290 aa).

The first 21 residues, 1-21, serve as a signal peptide directing secretion; that stretch reads MKLSVSIFVLLAVSAFGGGSA. Residues 117–140 form a KWL1-binding extensive loop region (ELR) region; it reads VVLSRDTVLDKPVVGKGIFPIGRR. Asn159 and Asn208 each carry an N-linked (GlcNAc...) asparagine glycan.

Homodimer. Forms a heterodimer with the host cytosolic chorismate mutase CM2. Interacts with the host kiwellin KWL1 which acts as a defense protein that protects maize from infection.

It is found in the secreted. The protein localises to the host cytoplasm. It localises to the host cytosol. The catalysed reaction is chorismate = prephenate. Contrary to classical chorismate mutases, CMU1 is not subject to allosteric regulation by tryptophan and tyrosine. Activity is decreased in a non-competitive and allosteric manner by the binding of the host defense kiwellin KWL1 which probably blocks substrate access to the active site of CMU1. Its function is as follows. Secreted chorismate mutase that is one component of a cocktail of effectors shaping the host metabolome and acting as virulence factors. The enzyme is taken up by plant cells, can spread to neighboring cells where it affects the biosynthesis of the plant immune signal salicylic acid by channelling chorismate into the phenylpropanoid pathway. Interferes with the activity of host cytosolic chorismate mutase CM2 through heterodimerization. The polypeptide is Secreted chorismate mutase (CMU1) (Mycosarcoma maydis (Corn smut fungus)).